A 110-amino-acid polypeptide reads, in one-letter code: Large ribosomal subunit protein uL22 (110 aa).

The protein belongs to the universal ribosomal protein uL22 family. As to quaternary structure, part of the 50S ribosomal subunit.

Its function is as follows. This protein binds specifically to 23S rRNA; its binding is stimulated by other ribosomal proteins, e.g. L4, L17, and L20. It is important during the early stages of 50S assembly. It makes multiple contacts with different domains of the 23S rRNA in the assembled 50S subunit and ribosome. The globular domain of the protein is located near the polypeptide exit tunnel on the outside of the subunit, while an extended beta-hairpin is found that lines the wall of the exit tunnel in the center of the 70S ribosome. The protein is Large ribosomal subunit protein uL22 of Buchnera aphidicola subsp. Acyrthosiphon pisum (strain 5A).